Reading from the N-terminus, the 317-residue chain is tRNA uridine(34) hydroxylase (317 aa).

The 95-residue stretch at Thr-129–Ser-223 folds into the Rhodanese domain. Cys-183 functions as the Cysteine persulfide intermediate in the catalytic mechanism. A disordered region spans residues Ala-298–Ala-317.

It belongs to the TrhO family.

The enzyme catalyses uridine(34) in tRNA + AH2 + O2 = 5-hydroxyuridine(34) in tRNA + A + H2O. Its function is as follows. Catalyzes oxygen-dependent 5-hydroxyuridine (ho5U) modification at position 34 in tRNAs. The sequence is that of tRNA uridine(34) hydroxylase from Pseudomonas syringae pv. tomato (strain ATCC BAA-871 / DC3000).